The sequence spans 215 residues: Sec-independent protein translocase protein TatB (215 aa).

Residues 1–21 (MLDIGWTELVVIAIVLIIVVG) form a helical membrane-spanning segment. Disordered stretches follow at residues 95-119 (DLQK…EPVN) and 138-215 (AVSS…KGDA). Residues 145–157 (QMDRAADVPKASE) are compositionally biased toward basic and acidic residues. The segment covering 203-215 (SKTRAASRKKGDA) has biased composition (basic residues).

This sequence belongs to the TatB family. As to quaternary structure, the Tat system comprises two distinct complexes: a TatABC complex, containing multiple copies of TatA, TatB and TatC subunits, and a separate TatA complex, containing only TatA subunits. Substrates initially bind to the TatABC complex, which probably triggers association of the separate TatA complex to form the active translocon.

The protein resides in the cell inner membrane. In terms of biological role, part of the twin-arginine translocation (Tat) system that transports large folded proteins containing a characteristic twin-arginine motif in their signal peptide across membranes. Together with TatC, TatB is part of a receptor directly interacting with Tat signal peptides. TatB may form an oligomeric binding site that transiently accommodates folded Tat precursor proteins before their translocation. This Rhizobium meliloti (strain 1021) (Ensifer meliloti) protein is Sec-independent protein translocase protein TatB.